The following is a 336-amino-acid chain: UPF0324 membrane protein BT_1919 (336 aa).

Transmembrane regions (helical) follow at residues 2–19 (LHGV…FYIG), 23–45 (FVRS…YANS), 85–107 (IGLP…GIYL), 117–134 (IALL…AAIL), 147–169 (TAVS…PFLY), 210–232 (AIIV…TYLV), 253–275 (WFAI…AQLV), and 310–332 (FVLA…KYLT).

This sequence belongs to the UPF0324 family.

The protein localises to the cell membrane. In Bacteroides thetaiotaomicron (strain ATCC 29148 / DSM 2079 / JCM 5827 / CCUG 10774 / NCTC 10582 / VPI-5482 / E50), this protein is UPF0324 membrane protein BT_1919.